Consider the following 1483-residue polypeptide: MQRSPLEKASVLSKLFFSWTRPILIKGYRQRLELSDIYQVPSTDSADHLSEKLEREWDRELASKKNPKLINALRRCFFWRFAFYGILLYLGEVTKAVQPLLLGRIIASYDPDNKQERSIAIYLAIGLCLLFIMRPLLLHPAIFGLHHIGMQIRIAMFSLIYKKTLKLSSRVLDKISIGQLVSLLSNNLNKFDEGLALAHFVWIAPLQVTLLMGLLWDLLQASAFCGLAFLIVLALVQAGLGRMIMKYRDQRAGKINERLVITSEVIENIQSVKAYCWEEAMEKIIENIRQTELKLTRKAAHVRYFNSSAFFFSGFFVVSLSVLPYALIKTIILRKIFTTISFCIVLRMAVTRQFPWAVQTWYDSLGAINKIQDFLQKQEYKTLEYNLTTTEVMMENVTAFWEEGFGELLEKAKENSNDRKISNGDNSLFFSNFSLLGTPVLKDINFKIERGQLLAVAGSTGAGKTSLLMMIMGELEPSEGKIKHSGRISFCSQFSWIMPGTIKENIIFGVSYDEYRYRSVIKACQLEEDISKFAEKDNIVLGEGGVTLSGGQRARISLARAVYKDADLYLLDSPFGYLDVLTEKEIFESCVCKLMANKTRILVTSKMEHLKKADKVLILHEGSCYFYGTFSELQSLRPDFSSKLMGYDSFDQFSPERRNSIITETLRRFSLEGDAAVPWNETKKQSFKQTGEFGEKRKNSILNPINSIRKFSIVQKTPLPMNGIEGESEVPVERRLSLFPDCEQGEAILPRSNMINTGPTLRRQRRQSVLNLMTRSSVNQGQSIHRRTTASTRKMSLAPQANLTEMDIYSRRLSQDSGLEISEEINEEDLKECFFDDVESIPPVTTWNTYLRYITVHKNLIFVLIWCLVIFLAEVAVSLVVLWILRNLSSQDKGNSTQSVNSSYAVIFTSTSAYYIFYIYVGVADTLLALGLFRGLPLVHTLITVSKILHHKMLHSVLQAPMSTLNTLKAGGILNRFSKDIAILDDLLPLTIFDFIQLLLIVIGAVAVVSVLQPYIFLATVPVIAAFIILRAYFLHTSQQLKQLESEGRSPIFTHLLTSLKGLWTLRAFGRQPYFETLFHKALNLHTANWFLYLSTLRWFQMRMEIIFVIFFIAVTFISILTTGEGEGTVGIILTLAMNIMGTLQWAVNSSIEVDSLMRSVSRVFKFIDMPTEESKPPTKSFKPSKDAQLSKVTITENRHVREDDIWPSGGQMTVKDLTAKYIDGGNAILENISFSISPGQRVGLLGRTGSGKSTLLSALLRLVNTEGEIQIDGVSWDSIPLQEWRRAFGVIPQKVFIFSGTFRKNLDPYGQWNDQEIWKVADEVGLRSVIEQFPGKLDFVLVDGGYVLSHGHKQLMCLARSVLRKAKILLLDEPSAHLDPITYQIIRRTLKQAFADCTVILSEHRIEAMLECQRFLVIEDSRLRQFESIQRLLSERSAFRQAIGPPERPGLLPHRLSSRQRSPSRIAALKEETEDEVQDTRL.

Residues 1–77 are Cytoplasmic-facing; sequence MQRSPLEKAS…KLINALRRCF (77 aa). The helical transmembrane segment at 78-98 threads the bilayer; that stretch reads FWRFAFYGILLYLGEVTKAVQ. An ABC transmembrane type-1 1 domain is found at 81-365; the sequence is FAFYGILLYL…WAVQTWYDSL (285 aa). Over 99–122 the chain is Extracellular; sequence PLLLGRIIASYDPDNKQERSIAIY. Residues 123 to 146 form a helical membrane-spanning segment; the sequence is LAIGLCLLFIMRPLLLHPAIFGLH. At 147 to 195 the chain is on the cytoplasmic side; sequence HIGMQIRIAMFSLIYKKTLKLSSRVLDKISIGQLVSLLSNNLNKFDEGL. A helical membrane pass occupies residues 196 to 216; sequence ALAHFVWIAPLQVTLLMGLLW. At 217 to 222 the chain is on the extracellular side; it reads DLLQAS. A helical transmembrane segment spans residues 223–243; the sequence is AFCGLAFLIVLALVQAGLGRM. The Cytoplasmic portion of the chain corresponds to 244-298; that stretch reads IMKYRDQRAGKINERLVITSEVIENIQSVKAYCWEEAMEKIIENIRQTELKLTRK. The helical transmembrane segment at 299-319 threads the bilayer; sequence AAHVRYFNSSAFFFSGFFVVS. Residues 320–339 are Extracellular-facing; that stretch reads LSVLPYALIKTIILRKIFTT. A helical membrane pass occupies residues 340–358; sequence ISFCIVLRMAVTRQFPWAV. Residues 359 to 859 are Cytoplasmic-facing; sequence QTWYDSLGAI…YLRYITVHKN (501 aa). ATP-binding positions include tryptophan 401, serine 434, 458–465, and glutamine 493; that span reads GSTGAGKT. Residues 423 to 646 enclose the ABC transporter 1 domain; it reads NGDNSLFFSN…RPDFSSKLMG (224 aa). A lipid anchor (S-palmitoyl cysteine) is attached at cysteine 524. Residues serine 549 and serine 660 each carry the phosphoserine modification. The interval 654–832 is disordered R region; the sequence is SPERRNSIIT…EEINEEDLKE (179 aa). Serine 670 carries the post-translational modification Phosphoserine; by PKA. At serine 686 the chain carries Phosphoserine. Residue lysine 688 forms a Glycyl lysine isopeptide (Lys-Gly) (interchain with G-Cter in ubiquitin) linkage. A phosphoserine mark is found at serine 700 and serine 712. Threonine 717 carries the phosphothreonine modification. Serine 737, serine 768, serine 791, serine 796, and serine 814 each carry phosphoserine. Residues 860–880 traverse the membrane as a helical segment; that stretch reads LIFVLIWCLVIFLAEVAVSLV. Positions 860-1156 constitute an ABC transmembrane type-1 2 domain; the sequence is LIFVLIWCLV…AVNSSIEVDS (297 aa). Topologically, residues 881-919 are extracellular; the sequence is VLWILRNLSSQDKGNSTQSVNSSYAVIFTSTSAYYIFYI. Residues asparagine 887, asparagine 895, and asparagine 901 are each glycosylated (N-linked (GlcNAc...) asparagine). The chain crosses the membrane as a discontinuously helical span at residues 920 to 940; the sequence is YVGVADTLLALGLFRGLPLVH. Topologically, residues 941–991 are cytoplasmic; the sequence is TLITVSKILHHKMLHSVLQAPMSTLNTLKAGGILNRFSKDIAILDDLLPLT. The helical transmembrane segment at 992–1012 threads the bilayer; that stretch reads IFDFIQLLLIVIGAVAVVSVL. The Extracellular portion of the chain corresponds to 1013–1014; the sequence is QP. The chain crosses the membrane as a helical span at residues 1015–1035; that stretch reads YIFLATVPVIAAFIILRAYFL. The Cytoplasmic segment spans residues 1036–1096; it reads HTSQQLKQLE…TANWFLYLST (61 aa). A helical membrane pass occupies residues 1097–1117; the sequence is LRWFQMRMEIIFVIFFIAVTF. Residues 1118–1131 are Extracellular-facing; that stretch reads ISILTTGEGEGTVG. The chain crosses the membrane as a helical span at residues 1132 to 1152; sequence IILTLAMNIMGTLQWAVNSSI. At 1153–1483 the chain is on the cytoplasmic side; it reads EVDSLMRSVS…TEDEVQDTRL (331 aa). Residues 1213 to 1446 enclose the ABC transporter 2 domain; it reads MTVKDLTAKY…RSAFRQAIGP (234 aa). ATP is bound by residues tyrosine 1222 and 1247–1254; that span reads GRTGSGKS. An interaction with GORASP2 region spans residues 1389-1483; sequence RTLKQAFADC…TEDEVQDTRL (95 aa). Cysteine 1398 is lipidated: S-palmitoyl cysteine. The disordered stretch occupies residues 1444–1483; sequence IGPPERPGLLPHRLSSRQRSPSRIAALKEETEDEVQDTRL. Residue serine 1459 is modified to Phosphoserine. A compositionally biased stretch (acidic residues) spans 1473-1483; it reads ETEDEVQDTRL. Residues 1481-1483 carry the PDZ-binding motif; the sequence is TRL.

It belongs to the ABC transporter superfamily. ABCC family. CFTR transporter (TC 3.A.1.202) subfamily. As to quaternary structure, monomer; does not require oligomerization for channel activity. May form oligomers in the membrane. Interacts with SLC26A3, SLC26A6 and NHERF1. Interacts with SHANK2. Interacts with MYO6. Interacts (via C-terminus) with GOPC (via PDZ domain); this promotes CFTR internalization and thereby decreases channel activity. Interacts with SLC4A7 through NHERF1. Found in a complex with MYO5B and RAB11A. Interacts with ANO1. Interacts with SLC26A8. Interacts with AHCYL1; the interaction increases CFTR activity. Interacts with CSE1L. The core-glycosylated form interacts with GORASP2 (via PDZ GRASP-type 1 domain) in respone to ER stress. Interacts with MARCHF2; the interaction leads to CFTR ubiqtuitination and degradation. Interacts with ADGRG2. N-glycosylated. In terms of processing, phosphorylated; cAMP treatment promotes phosphorylation and activates the channel. Dephosphorylation decreases the ATPase activity (in vitro). Phosphorylation at PKA sites activates the channel. Phosphorylation at PKC sites enhances the response to phosphorylation by PKA. Phosphorylated by AMPK; this inhibits channel activity. Post-translationally, ubiquitinated, leading to its degradation in the lysosome. Deubiquitination by USP10 in early endosomes enhances its endocytic recycling to the cell membrane. Ubiquitinated by RNF185 during ER stress. Ubiquitinated by MARCHF2.

It localises to the apical cell membrane. The protein localises to the early endosome membrane. The protein resides in the cell membrane. It is found in the recycling endosome membrane. Its subcellular location is the endoplasmic reticulum membrane. It localises to the nucleus. The enzyme catalyses ATP + H2O + closed Cl(-) channel = ADP + phosphate + open Cl(-) channel.. It carries out the reaction chloride(in) = chloride(out). It catalyses the reaction hydrogencarbonate(in) = hydrogencarbonate(out). The catalysed reaction is ATP + H2O = ADP + phosphate + H(+). In terms of biological role, epithelial ion channel that plays an important role in the regulation of epithelial ion and water transport and fluid homeostasis. Mediates the transport of chloride ions across the cell membrane. Possesses an intrinsic ATPase activity and utilizes ATP to gate its channel; the passive flow of anions through the channel is gated by cycles of ATP binding and hydrolysis by the ATP-binding domains. The ion channel is also permeable to HCO(3)(-); selectivity depends on the extracellular chloride concentration. Exerts its function also by modulating the activity of other ion channels and transporters. Contributes to the regulation of the pH and the ion content of the epithelial fluid layer. Modulates the activity of the epithelial sodium channel (ENaC) complex, in part by regulating the cell surface expression of the ENaC complex. May regulate bicarbonate secretion and salvage in epithelial cells by regulating the transporter SLC4A7. Can inhibit the chloride channel activity of ANO1. Plays a role in the chloride and bicarbonate homeostasis during sperm epididymal maturation and capacitation. In Canis lupus familiaris (Dog), this protein is Cystic fibrosis transmembrane conductance regulator.